A 112-amino-acid chain; its full sequence is MKSRSRKSVILQDYYRGDSNIEVAGYDTIRGNSLIDYIHKALRAYDIEGMKGFDRVRSEIPYSMKAVIGVLQALARIRLDPSRKNDREANRAAEILEHLRMLDEKLERWGVK.

This is an uncharacterized protein from Archaeoglobus fulgidus (strain ATCC 49558 / DSM 4304 / JCM 9628 / NBRC 100126 / VC-16).